The chain runs to 171 residues: S-ribosylhomocysteine lyase (171 aa).

Fe cation-binding residues include His54, His58, and Cys128.

It belongs to the LuxS family. As to quaternary structure, homodimer. Fe cation serves as cofactor.

The enzyme catalyses S-(5-deoxy-D-ribos-5-yl)-L-homocysteine = (S)-4,5-dihydroxypentane-2,3-dione + L-homocysteine. Its function is as follows. Involved in the synthesis of autoinducer 2 (AI-2) which is secreted by bacteria and is used to communicate both the cell density and the metabolic potential of the environment. The regulation of gene expression in response to changes in cell density is called quorum sensing. Catalyzes the transformation of S-ribosylhomocysteine (RHC) to homocysteine (HC) and 4,5-dihydroxy-2,3-pentadione (DPD). This Aliarcobacter butzleri (strain RM4018) (Arcobacter butzleri) protein is S-ribosylhomocysteine lyase.